Here is a 393-residue protein sequence, read N- to C-terminus: NAD(P)H-quinone oxidoreductase subunit H, chloroplastic (393 aa).

It belongs to the complex I 49 kDa subunit family. As to quaternary structure, NDH is composed of at least 16 different subunits, 5 of which are encoded in the nucleus.

The protein localises to the plastid. It is found in the chloroplast thylakoid membrane. It carries out the reaction a plastoquinone + NADH + (n+1) H(+)(in) = a plastoquinol + NAD(+) + n H(+)(out). The enzyme catalyses a plastoquinone + NADPH + (n+1) H(+)(in) = a plastoquinol + NADP(+) + n H(+)(out). NDH shuttles electrons from NAD(P)H:plastoquinone, via FMN and iron-sulfur (Fe-S) centers, to quinones in the photosynthetic chain and possibly in a chloroplast respiratory chain. The immediate electron acceptor for the enzyme in this species is believed to be plastoquinone. Couples the redox reaction to proton translocation, and thus conserves the redox energy in a proton gradient. The chain is NAD(P)H-quinone oxidoreductase subunit H, chloroplastic from Ipomoea purpurea (Common morning glory).